The primary structure comprises 136 residues: Small ribosomal subunit protein uS19 (136 aa).

Belongs to the universal ribosomal protein uS19 family.

In terms of biological role, protein S19 forms a complex with S13 that binds strongly to the 16S ribosomal RNA. This chain is Small ribosomal subunit protein uS19, found in Methanosphaera stadtmanae (strain ATCC 43021 / DSM 3091 / JCM 11832 / MCB-3).